The sequence spans 379 residues: Sialidase-2 (379 aa).

An FRIP motif motif is present at residues 20 to 23 (YRIP). Residues R21 and R41 each contribute to the substrate site. Catalysis depends on D46, which acts as the Proton acceptor. A BNR 1 repeat occupies 127–138 (ITSTDHGKTWSA). Residues Y179 and Y181 each coordinate substrate. A BNR 2 repeat occupies 197–208 (FLSHDHGSTWEL). The substrate site is built by E218, R237, and R303. Residue Y333 is the Nucleophile of the active site. The active site involves E354.

This sequence belongs to the glycosyl hydrolase 33 family.

It is found in the cytoplasm. It catalyses the reaction Hydrolysis of alpha-(2-&gt;3)-, alpha-(2-&gt;6)-, alpha-(2-&gt;8)- glycosidic linkages of terminal sialic acid residues in oligosaccharides, glycoproteins, glycolipids, colominic acid and synthetic substrates.. Catalyzes the removal of sialic acid (N-acetylneuraminic acid) moieties from glycoproteins, oligosaccharides and gangliosides. This is Sialidase-2 (NEU2) from Cricetulus griseus (Chinese hamster).